We begin with the raw amino-acid sequence, 177 residues long: tRNA-splicing endonuclease (177 aa).

Active-site residues include Tyr-114, His-123, and Lys-154.

It belongs to the tRNA-intron endonuclease family. Archaeal short subfamily. In terms of assembly, homotetramer; although the tetramer contains four active sites, only two participate in the cleavage. Therefore, it should be considered as a dimer of dimers.

The catalysed reaction is pretRNA = a 3'-half-tRNA molecule with a 5'-OH end + a 5'-half-tRNA molecule with a 2',3'-cyclic phosphate end + an intron with a 2',3'-cyclic phosphate and a 5'-hydroxyl terminus.. Endonuclease that removes tRNA introns. Cleaves pre-tRNA at the 5'- and 3'-splice sites to release the intron. The products are an intron and two tRNA half-molecules bearing 2',3' cyclic phosphate and 5'-OH termini. Recognizes a pseudosymmetric substrate in which 2 bulged loops of 3 bases are separated by a stem of 4 bp. The sequence is that of tRNA-splicing endonuclease from Methanococcus vannielii (strain ATCC 35089 / DSM 1224 / JCM 13029 / OCM 148 / SB).